The chain runs to 284 residues: Urease accessory protein UreD (284 aa).

Residues Met1–Arg28 form a disordered region.

This sequence belongs to the UreD family. As to quaternary structure, ureD, UreF and UreG form a complex that acts as a GTP-hydrolysis-dependent molecular chaperone, activating the urease apoprotein by helping to assemble the nickel containing metallocenter of UreC. The UreE protein probably delivers the nickel.

The protein localises to the cytoplasm. Required for maturation of urease via the functional incorporation of the urease nickel metallocenter. In Agrobacterium fabrum (strain C58 / ATCC 33970) (Agrobacterium tumefaciens (strain C58)), this protein is Urease accessory protein UreD.